A 715-amino-acid polypeptide reads, in one-letter code: Serrate RNA effector molecule homolog (715 aa).

Disordered regions lie at residues methionine 1–proline 87, glutamate 223–alanine 259, and glutamate 629–proline 715. Basic and acidic residues-rich tracts occupy residues glycine 7 to arginine 25, tyrosine 37 to aspartate 57, and glutamate 223 to glutamate 242. Residues proline 243 to threonine 256 are compositionally biased toward acidic residues. The segment covering glutamate 629–glycine 659 has biased composition (basic and acidic residues).

It belongs to the ARS2 family.

Its subcellular location is the nucleus. Its function is as follows. Acts as a mediator between the cap-binding complex (CBC) and the primary microRNAs (miRNAs) processing machinery. Contributes to the stability and delivery of capped primary miRNA transcripts to the primary miRNA processing complex, thereby playing a role in RNA-mediated gene silencing (RNAi) by miRNAs. The protein is Serrate RNA effector molecule homolog of Caenorhabditis briggsae.